Consider the following 412-residue polypeptide: Cathepsin D (412 aa).

The signal sequence occupies residues 1 to 20 (MQPSSLLPLALCLLAAPASA). The propeptide at 21–64 (LVRIPLHKFTSIRRTMSEVGGSVEDLIAKGPVSKYSQAVPAVTE) is activation peptide. O-linked (GalNAc...) threonine glycosylation is present at Thr63. In terms of domain architecture, Peptidase A1 spans 79–407 (YYGEIGIGTP…DRDNNRVGFA (329 aa)). Cystine bridges form between Cys91/Cys160 and Cys110/Cys117. Asp97 is a catalytic residue. N-linked (GlcNAc...) asparagine glycans are attached at residues Asn134 and Asn263. A disulfide bridge connects residues Cys286 and Cys290. Residue Asp295 is part of the active site. Cys329 and Cys366 are joined by a disulfide.

This sequence belongs to the peptidase A1 family. As to quaternary structure, consists of a light chain and a heavy chain. Interacts with ADAM30; this leads to activation of CTSD. Interacts with GRN; stabilizes CTSD; increases its proteolytic activity. N- and O-glycosylated. Post-translationally, undergoes proteolytic cleavage and activation by ADAM30. In terms of processing, as well as the major heavy chain which starts at Leu-169, 2 minor forms starting at Gly-170 and Gly-171 have been identified. An additional form starting at Ala-168 has also been identified. As to expression, expressed in the aorta extracellular space (at protein level). Expressed in liver (at protein level).

The protein localises to the lysosome. It localises to the melanosome. It is found in the secreted. Its subcellular location is the extracellular space. The catalysed reaction is Specificity similar to, but narrower than, that of pepsin A. Does not cleave the 4-Gln-|-His-5 bond in B chain of insulin.. Its function is as follows. Acid protease active in intracellular protein breakdown. Plays a role in APP processing following cleavage and activation by ADAM30 which leads to APP degradation. Involved in the pathogenesis of several diseases such as breast cancer and possibly Alzheimer disease. This Homo sapiens (Human) protein is Cathepsin D (CTSD).